Consider the following 337-residue polypeptide: Phosphate acyltransferase (337 aa).

This sequence belongs to the PlsX family. Homodimer. Probably interacts with PlsY.

The protein localises to the cytoplasm. It carries out the reaction a fatty acyl-[ACP] + phosphate = an acyl phosphate + holo-[ACP]. It participates in lipid metabolism; phospholipid metabolism. Its function is as follows. Catalyzes the reversible formation of acyl-phosphate (acyl-PO(4)) from acyl-[acyl-carrier-protein] (acyl-ACP). This enzyme utilizes acyl-ACP as fatty acyl donor, but not acyl-CoA. The protein is Phosphate acyltransferase of Polynucleobacter necessarius subsp. necessarius (strain STIR1).